The primary structure comprises 406 residues: Tryptophan synthase beta chain (406 aa).

Position 99 is an N6-(pyridoxal phosphate)lysine (K99).

It belongs to the TrpB family. Tetramer of two alpha and two beta chains. The cofactor is pyridoxal 5'-phosphate.

The catalysed reaction is (1S,2R)-1-C-(indol-3-yl)glycerol 3-phosphate + L-serine = D-glyceraldehyde 3-phosphate + L-tryptophan + H2O. The protein operates within amino-acid biosynthesis; L-tryptophan biosynthesis; L-tryptophan from chorismate: step 5/5. The beta subunit is responsible for the synthesis of L-tryptophan from indole and L-serine. This chain is Tryptophan synthase beta chain, found in Brucella melitensis biotype 2 (strain ATCC 23457).